A 360-amino-acid chain; its full sequence is POU domain, class 5, transcription factor 1 (360 aa).

Disordered stretches follow at residues 1-52 (MAGH…PGVG) and 88-114 (GGLETSQPEGEAGVGVESNSDGASPEP). Residues 4-12 (HLASDFAFS) carry the 9aaTAD motif. Ser111 carries the post-translational modification Phosphoserine; by MAPK. A Glycyl lysine isopeptide (Lys-Gly) (interchain with G-Cter in SUMO) cross-link involves residue Lys123. The region spanning 138–212 (DIKALQKELE…LLQKWVEEAD (75 aa)) is the POU-specific domain. Residues Arg157 and Gln164 each coordinate DNA. DNA-binding stretches follow at residues 180–186 (SQTTICR) and 193–196 (SFKN). Positions 230-289 (RKRKRTSIENRVRGNLENLFLQCPKPTLQQISHIAQQLGLEKDVVRVWFCNRRQKGKRSS) form a DNA-binding region, homeobox. A Phosphothreonine modification is found at Thr235. 4 positions are modified to phosphoserine: Ser236, Ser289, Ser290, and Ser355.

The protein belongs to the POU transcription factor family. Class-5 subfamily. As to quaternary structure, interacts with PKM. Interacts with WWP2. Interacts with UBE2I and ZSCAN10. Interacts with PCGF1. Interacts with ESRRB; recruits ESRRB near the POU5F1-SOX2 element in the NANOG proximal promoter; the interaction is DNA independent. Interacts with ZNF322. Interacts with MAPK8 and MAPK9; the interaction allows MAPK8 and MAPK9 to phosphorylate POU5F1 on Ser-355. Interacts (when phosphorylated on Ser-355) with FBXW8. Interacts with FBXW4. Interacts with SOX2 and SOX15; binds synergistically with either SOX2 or SOX15 to DNA. Interacts with DDX56. Sumoylation enhances the protein stability, DNA binding and transactivation activity. Sumoylation is required for enhanced YES1 expression. Post-translationally, ubiquitinated; undergoes 'Lys-63'-linked polyubiquitination by WWP2 leading to proteasomal degradation. In terms of processing, ERK1/2-mediated phosphorylation at Ser-111 promotes nuclear exclusion and proteasomal degradation. Phosphorylation at Thr-235 and Ser-236 decrease DNA-binding and alters ability to activate transcription. Expressed in developing brain. Highest levels found in specific cell layers of the cortex, the olfactory bulb, the hippocampus and the cerebellum. Low levels of expression in adult tissues.

It localises to the cytoplasm. The protein localises to the nucleus. Functionally, transcription factor that binds to the octamer motif (5'-ATTTGCAT-3'). Forms a trimeric complex with SOX2 or SOX15 on DNA and controls the expression of a number of genes involved in embryonic development such as YES1, FGF4, UTF1 and ZFP206. Critical for early embryogenesis and for embryonic stem cell pluripotency. This is POU domain, class 5, transcription factor 1 (POU5F1) from Homo sapiens (Human).